The chain runs to 198 residues: Nudix hydrolase 21, chloroplastic (198 aa).

A chloroplast-targeting transit peptide spans 1 to 37 (MISLFISNFSNLSNLSPTFDNMNMNIPSKKIVPVPTP). The 133-residue stretch at 59 to 191 (GYRQVVGCVP…WMREALEAFI (133 aa)) folds into the Nudix hydrolase domain. The Nudix box signature appears at 98 to 119 (GGWEIDESIEEAALRETIEEAG). Residues Glu113 and Glu117 each contribute to the Mg(2+) site.

The protein belongs to the Nudix hydrolase family. It depends on Mg(2+) as a cofactor. Mn(2+) serves as cofactor. As to expression, expressed in roots, leaves, stems and inflorescences.

The protein resides in the plastid. It localises to the chloroplast. Its function is as follows. Probably mediates the hydrolysis of some nucleoside diphosphate derivatives. This is Nudix hydrolase 21, chloroplastic (NUDT21) from Arabidopsis thaliana (Mouse-ear cress).